The chain runs to 188 residues: MEENKQNQNLNTEETTEQQTEAETVEVTEEEVVQADLVEEPAAPDFEAQLAEAKASELRLRADFDNFKRRNRIEAENRAKYSSQTIVEKLLPLVDNLDRALQIESDNEETKSVLAGVEMVKRQLVETLQNEGVIEIPAVGEAFDPNLHQAVVQEPSEEHESGVVTAEFQKGYKLHDRVIRPSMVKVAE.

The span at 1-22 shows a compositional bias: low complexity; that stretch reads MEENKQNQNLNTEETTEQQTEA. The disordered stretch occupies residues 1-26; that stretch reads MEENKQNQNLNTEETTEQQTEAETVE.

It belongs to the GrpE family. In terms of assembly, homodimer.

The protein resides in the cytoplasm. Functionally, participates actively in the response to hyperosmotic and heat shock by preventing the aggregation of stress-denatured proteins, in association with DnaK and GrpE. It is the nucleotide exchange factor for DnaK and may function as a thermosensor. Unfolded proteins bind initially to DnaJ; upon interaction with the DnaJ-bound protein, DnaK hydrolyzes its bound ATP, resulting in the formation of a stable complex. GrpE releases ADP from DnaK; ATP binding to DnaK triggers the release of the substrate protein, thus completing the reaction cycle. Several rounds of ATP-dependent interactions between DnaJ, DnaK and GrpE are required for fully efficient folding. The sequence is that of Protein GrpE from Exiguobacterium sibiricum (strain DSM 17290 / CCUG 55495 / CIP 109462 / JCM 13490 / 255-15).